Here is a 347-residue protein sequence, read N- to C-terminus: Holliday junction branch migration complex subunit RuvB (347 aa).

The segment at 1-185 (MSDDPTTPEL…FGFTAHLEFY (185 aa)) is large ATPase domain (RuvB-L). Residues L24, R25, G66, K69, T70, T71, 132 to 134 (EDF), R175, Y185, and R222 contribute to the ATP site. Position 70 (T70) interacts with Mg(2+). The tract at residues 186 to 255 (DEGELAQVLA…AVHAALELYD (70 aa)) is small ATPAse domain (RuvB-S). Residues 258–347 (ELGLDRLDRA…SQPPSLMDDL (90 aa)) form a head domain (RuvB-H) region. DNA is bound by residues R313 and R318.

Belongs to the RuvB family. In terms of assembly, homohexamer. Forms an RuvA(8)-RuvB(12)-Holliday junction (HJ) complex. HJ DNA is sandwiched between 2 RuvA tetramers; dsDNA enters through RuvA and exits via RuvB. An RuvB hexamer assembles on each DNA strand where it exits the tetramer. Each RuvB hexamer is contacted by two RuvA subunits (via domain III) on 2 adjacent RuvB subunits; this complex drives branch migration. In the full resolvosome a probable DNA-RuvA(4)-RuvB(12)-RuvC(2) complex forms which resolves the HJ.

The protein resides in the cytoplasm. It catalyses the reaction ATP + H2O = ADP + phosphate + H(+). In terms of biological role, the RuvA-RuvB-RuvC complex processes Holliday junction (HJ) DNA during genetic recombination and DNA repair, while the RuvA-RuvB complex plays an important role in the rescue of blocked DNA replication forks via replication fork reversal (RFR). RuvA specifically binds to HJ cruciform DNA, conferring on it an open structure. The RuvB hexamer acts as an ATP-dependent pump, pulling dsDNA into and through the RuvAB complex. RuvB forms 2 homohexamers on either side of HJ DNA bound by 1 or 2 RuvA tetramers; 4 subunits per hexamer contact DNA at a time. Coordinated motions by a converter formed by DNA-disengaged RuvB subunits stimulates ATP hydrolysis and nucleotide exchange. Immobilization of the converter enables RuvB to convert the ATP-contained energy into a lever motion, pulling 2 nucleotides of DNA out of the RuvA tetramer per ATP hydrolyzed, thus driving DNA branch migration. The RuvB motors rotate together with the DNA substrate, which together with the progressing nucleotide cycle form the mechanistic basis for DNA recombination by continuous HJ branch migration. Branch migration allows RuvC to scan DNA until it finds its consensus sequence, where it cleaves and resolves cruciform DNA. The protein is Holliday junction branch migration complex subunit RuvB of Leifsonia xyli subsp. xyli (strain CTCB07).